A 358-amino-acid polypeptide reads, in one-letter code: 3-isopropylmalate dehydrogenase (358 aa).

Residue 77-90 (GPKWDNLPIDQRPE) coordinates NAD(+). Residues R98, R108, R137, and D221 each contribute to the substrate site. Residues D221, D245, and D249 each contribute to the Mg(2+) site. 279–291 (GSAPDIAHLNIAN) lines the NAD(+) pocket.

Belongs to the isocitrate and isopropylmalate dehydrogenases family. LeuB type 1 subfamily. As to quaternary structure, homodimer. Requires Mg(2+) as cofactor. Mn(2+) serves as cofactor.

The protein resides in the cytoplasm. The catalysed reaction is (2R,3S)-3-isopropylmalate + NAD(+) = 4-methyl-2-oxopentanoate + CO2 + NADH. Its pathway is amino-acid biosynthesis; L-leucine biosynthesis; L-leucine from 3-methyl-2-oxobutanoate: step 3/4. Functionally, catalyzes the oxidation of 3-carboxy-2-hydroxy-4-methylpentanoate (3-isopropylmalate) to 3-carboxy-4-methyl-2-oxopentanoate. The product decarboxylates to 4-methyl-2 oxopentanoate. The polypeptide is 3-isopropylmalate dehydrogenase (Campylobacter jejuni (strain RM1221)).